Here is a 364-residue protein sequence, read N- to C-terminus: Methylthioribose-1-phosphate isomerase (364 aa).

Substrate contacts are provided by residues 53 to 55 (RGA), Arg90, and Gln200. The active-site Proton donor is Asp241. 251-252 (NK) is a substrate binding site.

This sequence belongs to the eIF-2B alpha/beta/delta subunits family. MtnA subfamily.

It catalyses the reaction 5-(methylsulfanyl)-alpha-D-ribose 1-phosphate = 5-(methylsulfanyl)-D-ribulose 1-phosphate. It participates in amino-acid biosynthesis; L-methionine biosynthesis via salvage pathway; L-methionine from S-methyl-5-thio-alpha-D-ribose 1-phosphate: step 1/6. In terms of biological role, catalyzes the interconversion of methylthioribose-1-phosphate (MTR-1-P) into methylthioribulose-1-phosphate (MTRu-1-P). In Methylobacterium nodulans (strain LMG 21967 / CNCM I-2342 / ORS 2060), this protein is Methylthioribose-1-phosphate isomerase.